The primary structure comprises 498 residues: Putative phosphotransferase 057R (498 aa).

This is Putative phosphotransferase 057R from Dryophytes versicolor (chameleon treefrog).